The primary structure comprises 496 residues: Cobyric acid synthase (496 aa).

One can recognise a GATase cobBQ-type domain in the interval 256–444; the sequence is KINIAVVLLR…IHGILDNQAF (189 aa). Residue Cys337 is the Nucleophile of the active site. His436 is a catalytic residue.

The protein belongs to the CobB/CobQ family. CobQ subfamily.

Its pathway is cofactor biosynthesis; adenosylcobalamin biosynthesis. Catalyzes amidations at positions B, D, E, and G on adenosylcobyrinic A,C-diamide. NH(2) groups are provided by glutamine, and one molecule of ATP is hydrogenolyzed for each amidation. The chain is Cobyric acid synthase from Phocaeicola vulgatus (strain ATCC 8482 / DSM 1447 / JCM 5826 / CCUG 4940 / NBRC 14291 / NCTC 11154) (Bacteroides vulgatus).